Here is a 2168-residue protein sequence, read N- to C-terminus: Bromodomain adjacent to zinc finger domain protein 2B (2168 aa).

Disordered stretches follow at residues 1 to 29, 140 to 348, 409 to 428, 459 to 479, 528 to 698, 719 to 740, 841 to 872, and 1021 to 1043; these read MESG…ASVV, FAPP…KQPQ, LKAG…SELR, SNPK…ENNH, STPF…LHIA, GTSS…RRVT, MEGR…PPNV, and RKKA…LNKE. The span at 8-29 shows a compositional bias: low complexity; it reads PSSAASSTTPTSSSTPSVASVV. Composition is skewed to polar residues over residues 146 to 163 and 171 to 193; these read NHDS…SNRN and GSIN…STTA. Composition is skewed to low complexity over residues 194 to 204 and 240 to 263; these read SSSMGQTKSTS and ESSS…ISSS. Positions 264 to 291 are enriched in acidic residues; that stretch reads DSDDLEEDEEEEDQSIEESEDDDSDSES. Positions 307 to 325 are enriched in basic and acidic residues; that stretch reads SDPKADGQKATEKAQEKRI. A compositionally biased stretch (low complexity) spans 335 to 348; sequence SQTHSFQSQQKQPQ. Polar residues-rich tracts occupy residues 461–479 and 528–551; these read PKAT…ENNH and STPF…QTPV. Residues 592–605 show a composition bias toward basic and acidic residues; that stretch reads RGTDSDIPSSKDSE. Residues 606-663 show a composition bias toward acidic residues; sequence DSNEDEEEDDEEEDEEDDEDDESDDSQSESDSNSESDTEGSEEEDDDDKDQDESDSDT. Positions 670 to 693 are enriched in polar residues; that stretch reads MKLNKTTSSVKSPSMSLTGHSTPR. The span at 720 to 732 shows a compositional bias: low complexity; it reads TSSSTLTSSPHSG. The MBD domain maps to 739 to 810; the sequence is VTDERELRIP…DNFSFSAKIR (72 aa). The segment covering 841-861 has biased composition (basic and acidic residues); that stretch reads MEGRRGRPPNPDRQRAREESR. Residues 883-1061 are a coiled coil; sequence AKLLRKLQAQ…ELEMAKELKK (179 aa). The region spanning 1087–1152 is the DDT domain; that stretch reads GSTFSDCLMV…LSAAVCDPGL (66 aa). The disordered stretch occupies residues 1265 to 1341; sequence KRDTSGGIDL…CEDEDEGDQA (77 aa). Residues 1297 to 1321 show a composition bias toward acidic residues; sequence SDYDDDDDDDSDDQGDEDDEDEEDK. Over residues 1322 to 1331 the composition is skewed to basic and acidic residues; sequence EDKKGKKTDI. Residues 1334-1375 adopt a coiled-coil conformation; it reads DEDEGDQAASVEELEKQIEKLSKQQSQYRRKLFDASHSLRSV. A Glycyl lysine isopeptide (Lys-Gly) (interchain with G-Cter in SUMO2) cross-link involves residue K1425. At K1462 the chain carries N6-acetyllysine. Phosphoserine is present on residues S1465 and S1467. The span at 1503 to 1533 shows a compositional bias: polar residues; the sequence is SGKHSLGSVQSTATQSNVEKADSNNLFNTGS. Disordered stretches follow at residues 1503 to 1542, 1582 to 1607, and 1670 to 1694; these read SGKH…FYSP, SLVT…SSAQ, and TSNV…AQPA. Pro residues predominate over residues 1588 to 1600; it reads SQPPSKSPSPTPA. The segment covering 1670 to 1692 has biased composition (polar residues); sequence TSNVASSKSESPVPQNEKATSAQ. S1680 bears the Phosphoserine mark. Residues 1931–1981 form a PHD-type zinc finger; the sequence is KVYCQICRKGDNEELLLLCDGCDKGCHTYCHRPKITTIPDGDWFCPACIAK. Residues 1998–2040 are disordered; that stretch reads KTNESKKGKKVTLTGDTEDEDSASTSSSLKRGNKDLKKRKMEE. T2014 carries the post-translational modification Phosphothreonine. Residue S2019 is modified to Phosphoserine. The span at 2029 to 2040 shows a compositional bias: basic and acidic residues; that stretch reads GNKDLKKRKMEE. One can recognise a Bromo domain in the interval 2060 to 2164; the sequence is RDDSKDLALC…KYFEKKWTDT (105 aa).

The protein belongs to the WAL family. In terms of assembly, component of the BRF-1 ISWI chromatin remodeling complex, at least composed of SMARCA1 and BAZ2B, which regulates the spacing of histone octamers on the DNA template to facilitate access to DNA. Within the BRF-1 ISWI chromatin remodeling complex interacts with SMARCA1; the interaction is direct. Component of the BRF-5 ISWI chromatin remodeling complex, at least composed of SMARCA5/SNF2H and BAZ2B, which regulates the spacing of histone octamers on the DNA template to facilitate access to DNA. Within the BRF-5 ISWI chromatin remodeling complex interacts with SMARCA5/SNF2H; the interaction is direct. Interacts with acetylated lysine residues on histone H1.4, H2A, H2B, H3 and H4 (in vitro). Interacts with EHMT1. As to expression, expressed at varying levels in several tissues, whereas a smaller transcript was expressed specifically in testis.

It localises to the nucleus. Its function is as follows. Regulatory subunit of the ATP-dependent BRF-1 and BRF-5 ISWI chromatin remodeling complexes, which form ordered nucleosome arrays on chromatin and facilitate access to DNA during DNA-templated processes such as DNA replication, transcription, and repair. Both complexes regulate the spacing of nucleosomes along the chromatin and have the ability to slide mononucleosomes to the center of a DNA template. The BRF-1 ISWI chromatin remodeling complex has a lower ATP hydrolysis rate than the BRF-5 ISWI chromatin remodeling complex. Chromatin reader protein, which may play a role in transcriptional regulation via interaction with ISWI. Involved in positively modulating the rate of age-related behavioral deterioration. Represses the expression of mitochondrial function-related genes, perhaps by occupying their promoter regions, working in concert with histone methyltransferase EHMT1. This Homo sapiens (Human) protein is Bromodomain adjacent to zinc finger domain protein 2B (BAZ2B).